Consider the following 180-residue polypeptide: Stathmin-3 (180 aa).

2 S-palmitoyl cysteine lipidation sites follow: C22 and C24. Residues 38-180 form the SLD domain; sequence GDMEVKQLDK…NKEQREEMSG (143 aa). 7 positions are modified to phosphoserine: S50, S60, S65, S68, S72, S73, and S81. Residues 58–82 form a disordered region; the sequence is LKSPSDLSPESPMLSSPPKRKDTSL. Residues 60–74 are compositionally biased toward low complexity; it reads SPSDLSPESPMLSSP. Residues 76 to 179 are a coiled coil; the sequence is KRKDTSLEEL…RNKEQREEMS (104 aa).

The protein belongs to the stathmin family. As to quaternary structure, interacts with STAT3. Interacts with CLU (secreted form); this interaction may act as an important modulator during neuronal differentiation. Post-translationally, N-terminal palmitoylation promotes specific anchoring to the cytosolic leaflet of Golgi membranes and subsequent vesicular trafficking along dendrites and axons. Neuronal Stathmins are substrates for palmitoyltransferases ZDHHC3, ZDHHC7 and ZDHHC15.

The protein resides in the golgi apparatus. It localises to the cell projection. It is found in the growth cone. The protein localises to the axon. Its subcellular location is the cytoplasm. The protein resides in the cytosol. Its function is as follows. Exhibits microtubule-destabilizing activity, which is antagonized by STAT3. In Bos taurus (Bovine), this protein is Stathmin-3 (STMN3).